The following is a 592-amino-acid chain: Frizzled-1 (592 aa).

The tract at residues 1 to 26 (MAERRGPAGGGSGEVGGGRRAGGDRC) is disordered. An N-terminal signal peptide occupies residues 1–48 (MAERRGPAGGGSGEVGGGRRAGGDRCPRRPPALPLLLLLWAAALPAGG). Residues 7–20 (PAGGGSGEVGGGRR) show a composition bias toward gly residues. Topologically, residues 49-271 (QPAAQPAALS…PEELRFSRTW (223 aa)) are extracellular. One can recognise an FZ domain in the interval 65 to 184 (PDHGYCQPIS…HGAGELCVGQ (120 aa)). 5 disulfides stabilise this stretch: cysteine 70-cysteine 131, cysteine 78-cysteine 124, cysteine 115-cysteine 152, cysteine 141-cysteine 181, and cysteine 145-cysteine 169. Asparagine 84 carries an N-linked (GlcNAc...) asparagine glycan. Asparagine 185 carries N-linked (GlcNAc...) asparagine glycosylation. The tract at residues 185–219 (NASERGTPTPALRPESWTSNPHRGGGAGGSGPGEA) is disordered. Positions 207 to 218 (RGGGAGGSGPGE) are enriched in gly residues. A helical membrane pass occupies residues 272-292 (IGIWSVLCCASTLFTVLTYLV). Residues 293–303 (DMKRFSYPERP) are Cytoplasmic-facing. Residues 304 to 324 (IIFLSGCYTAVAVAYIAGFLL) form a helical membrane-spanning segment. Over 325-351 (EERVVCNERFAEDGSRTVAQGTKREGC) the chain is Extracellular. Residues 352–372 (TILFMMLYFFGMASSIWWVIL) form a helical membrane-spanning segment. The Cytoplasmic portion of the chain corresponds to 373–394 (SLTWFLAAGMKWGHEAIEANSQ). The helical transmembrane segment at 395–415 (YFHLAAWAVPAIKTITILALG) threads the bilayer. Residues 416–438 (QVDGDVLSGVCFVGINNVDALRG) are Extracellular-facing. A helical transmembrane segment spans residues 439 to 459 (FVLAPLFVYLFIGTSFLLAGF). Over 460–485 (VSLFRIRTIMKHDGTKTEKLEKLMVR) the chain is Cytoplasmic. Residues 486–506 (IGIFSVLYTVPATIVIACYFY) form a helical membrane-spanning segment. Topologically, residues 507 to 546 (EQAFREQWERSWVTQSCKSYAIPCPNNHSSHHPPMSPDFT) are extracellular. The N-linked (GlcNAc...) asparagine glycan is linked to asparagine 533. The chain crosses the membrane as a helical span at residues 547-567 (VFMIKYLMTLIVGITSGFWIW). The Cytoplasmic portion of the chain corresponds to 568-592 (SGKTLNSWRKFYTRLTNSKQGETTV). The short motif at 570-575 (KTLNSW) is the Lys-Thr-X-X-X-Trp motif, mediates interaction with the PDZ domain of Dvl family members element. Positions 590–592 (TTV) match the PDZ-binding motif.

Belongs to the G-protein coupled receptor Fz/Smo family. As to expression, expressed in the lens, otic placode (medial wall of the vesicle) and in epibranchial placode. Also expressed in the developing somites (dermomyotome).

The protein resides in the cell membrane. Receptor for Wnt proteins. Functions in the canonical Wnt/beta-catenin signaling pathway. The canonical Wnt/beta-catenin signaling pathway leads to the activation of disheveled proteins, inhibition of GSK-3 kinase, nuclear accumulation of beta-catenin and activation of Wnt target genes. A second signaling pathway involving PKC and calcium fluxes has been seen for some family members, but it is not yet clear if it represents a distinct pathway or if it can be integrated in the canonical pathway, as PKC seems to be required for Wnt-mediated inactivation of GSK-3 kinase. Both pathways seem to involve interactions with G-proteins. May be involved in transduction and intercellular transmission of polarity information during tissue morphogenesis and/or in differentiated tissues. This is Frizzled-1 (FZD1) from Gallus gallus (Chicken).